The sequence spans 257 residues: Peptide methionine sulfoxide reductase (257 aa).

The interval 61-88 (LGFGSRPQPDPAASSAIAQGPDDDVPSP) is disordered. Serine 244 carries the post-translational modification Phosphoserine.

The protein belongs to the MsrA Met sulfoxide reductase family.

It catalyses the reaction L-methionyl-[protein] + [thioredoxin]-disulfide + H2O = L-methionyl-(S)-S-oxide-[protein] + [thioredoxin]-dithiol. It carries out the reaction [thioredoxin]-disulfide + L-methionine + H2O = L-methionine (S)-S-oxide + [thioredoxin]-dithiol. In terms of biological role, has an important function as a repair enzyme for proteins that have been inactivated by oxidation. Catalyzes the reversible oxidation-reduction of methionine sulfoxide in proteins to methionine. The polypeptide is Peptide methionine sulfoxide reductase (PMSR) (Brassica napus (Rape)).